A 194-amino-acid chain; its full sequence is Cysteine and glycine-rich protein 3 (194 aa).

Residues 1 to 5 (MPNWG) are interaction with TCAP. One can recognise an LIM zinc-binding 1 domain in the interval 10 to 61 (CGACDKTVYHAEEIQCNGRSFHKTCFHCMACRKALDSTTVAAHESEIYCKVC). The Nuclear localization signal motif lies at 64-69 (RKYGPK). The interval 94 to 105 (QSPKPARAATTS) is interaction with CLF2. A phosphoserine mark is found at serine 95, serine 111, and serine 153. Positions 120–171 (CPRCGKSVYAAEKVMGGGKPWHKTCFPCAICGKSLESTNVTDKDGELYCKVC) constitute an LIM zinc-binding 2 domain.

In terms of assembly, self-associates. Oligomeric in the cytoplasm and monomeric in the nucleus. Homooligomers preferentially form along the actin cytoskeleton. Interacts with TCAP, ACTN2 and NRAP. Interacts with LDHD, SPTB, MYOD1, MYOG, MYF6. Interacts with GLRX3 (via C-terminus); GLRX3 and calcineurin compete for interaction with CSRP3. Interacts with CFL2; the stoichiometry influences F-actin depolymerization and possibly two molecules of CFL2 can interact with one molecule of CSRP3 resulting in the highest functional impact; the interaction is stronger with phosphorylated CFL2. In terms of processing, phosphorylated by PKC/PRKCA. As to expression, high in striated muscle and adult heart.

The protein localises to the nucleus. It localises to the cytoplasm. The protein resides in the cytoskeleton. Its subcellular location is the myofibril. It is found in the sarcomere. The protein localises to the z line. In terms of biological role, positive regulator of myogenesis. Acts as a cofactor for myogenic bHLH transcription factors such as MYOD1, and probably MYOG and MYF6. Enhances the DNA-binding activity of the MYOD1:TCF3 isoform E47 complex and may promote formation of a functional MYOD1:TCF3 isoform E47:MEF2A complex involved in myogenesis. Plays a crucial and specific role in the organization of cytosolic structures in cardiomyocytes. Could play a role in mechanical stretch sensing. May be a scaffold protein that promotes the assembly of interacting proteins at Z-line structures. It is essential for calcineurin anchorage to the Z line. Required for stress-induced calcineurin-NFAT activation. The role in regulation of cytoskeleton dynamics by association with CFL2 is reported conflictingly. Proposed to contribute to the maintenance of muscle cell integrity through an actin-based mechanism. Can directly bind to actin filaments, cross-link actin filaments into bundles without polarity selectivity and protect them from dilution- and cofilin-mediated depolymerization; the function seems to involve its self-association. In vitro can inhibit PKC/PRKCA activity. Proposed to be involved in cardiac stress signaling by down-regulating excessive PKC/PRKCA signaling. The chain is Cysteine and glycine-rich protein 3 (Csrp3) from Rattus norvegicus (Rat).